The primary structure comprises 510 residues: GMP synthase [glutamine-hydrolyzing] (510 aa).

Residues 5–195 enclose the Glutamine amidotransferase type-1 domain; sequence MIVVLDFGSQ…VFEVCGCRGD (191 aa). Catalysis depends on Cys82, which acts as the Nucleophile. Residues His169 and Glu171 contribute to the active site. The 190-residue stretch at 196-385 folds into the GMPS ATP-PPase domain; the sequence is WTMENFIDEQ…LGIPDEIVWR (190 aa). Residue 223-229 participates in ATP binding; it reads SGGVDSS.

In terms of assembly, homodimer.

It carries out the reaction XMP + L-glutamine + ATP + H2O = GMP + L-glutamate + AMP + diphosphate + 2 H(+). Its pathway is purine metabolism; GMP biosynthesis; GMP from XMP (L-Gln route): step 1/1. Its function is as follows. Catalyzes the synthesis of GMP from XMP. In Geobacillus kaustophilus (strain HTA426), this protein is GMP synthase [glutamine-hydrolyzing].